We begin with the raw amino-acid sequence, 113 residues long: Putative membrane protein insertion efficiency factor (113 aa).

The protein belongs to the UPF0161 family.

The protein resides in the cell inner membrane. Could be involved in insertion of integral membrane proteins into the membrane. This chain is Putative membrane protein insertion efficiency factor, found in Campylobacter jejuni subsp. doylei (strain ATCC BAA-1458 / RM4099 / 269.97).